Reading from the N-terminus, the 356-residue chain is Anthranilate phosphoribosyltransferase (356 aa).

5-phospho-alpha-D-ribose 1-diphosphate is bound by residues G96, 99 to 100 (GD), T104, 106 to 109 (NIST), 124 to 132 (KHGNRSASG), and S136. G96 serves as a coordination point for anthranilate. S108 contacts Mg(2+). Residue N127 participates in anthranilate binding. An anthranilate-binding site is contributed by R182. Residues D241 and E242 each contribute to the Mg(2+) site.

It belongs to the anthranilate phosphoribosyltransferase family. In terms of assembly, homodimer. It depends on Mg(2+) as a cofactor.

It carries out the reaction N-(5-phospho-beta-D-ribosyl)anthranilate + diphosphate = 5-phospho-alpha-D-ribose 1-diphosphate + anthranilate. It functions in the pathway amino-acid biosynthesis; L-tryptophan biosynthesis; L-tryptophan from chorismate: step 2/5. Its function is as follows. Catalyzes the transfer of the phosphoribosyl group of 5-phosphorylribose-1-pyrophosphate (PRPP) to anthranilate to yield N-(5'-phosphoribosyl)-anthranilate (PRA). The sequence is that of Anthranilate phosphoribosyltransferase from Trichodesmium erythraeum (strain IMS101).